A 245-amino-acid chain; its full sequence is Octanoyltransferase (245 aa).

The BPL/LPL catalytic domain occupies 54 to 238 (GEATELVWLL…AFENIFGETR (185 aa)). Substrate-binding positions include 92–99 (RGGQLTYH), 167–169 (AIG), and 180–182 (GIA). Catalysis depends on Cys198, which acts as the Acyl-thioester intermediate.

It belongs to the LipB family.

The protein localises to the cytoplasm. It carries out the reaction octanoyl-[ACP] + L-lysyl-[protein] = N(6)-octanoyl-L-lysyl-[protein] + holo-[ACP] + H(+). It functions in the pathway protein modification; protein lipoylation via endogenous pathway; protein N(6)-(lipoyl)lysine from octanoyl-[acyl-carrier-protein]: step 1/2. Functionally, catalyzes the transfer of endogenously produced octanoic acid from octanoyl-acyl-carrier-protein onto the lipoyl domains of lipoate-dependent enzymes. Lipoyl-ACP can also act as a substrate although octanoyl-ACP is likely to be the physiological substrate. The chain is Octanoyltransferase from Rhodopseudomonas palustris (strain TIE-1).